We begin with the raw amino-acid sequence, 235 residues long: Ribonuclease 3 (235 aa).

The RNase III domain maps to 7–135 (FAALEARLGH…VVAAVYLDGG (129 aa)). E48 lines the Mg(2+) pocket. Residue D52 is part of the active site. Positions 121 and 124 each coordinate Mg(2+). Residue E124 is part of the active site. The 70-residue stretch at 160 to 229 (DPKTVLQEWA…ASAFLAREGV (70 aa)) folds into the DRBM domain.

This sequence belongs to the ribonuclease III family. In terms of assembly, homodimer. Mg(2+) serves as cofactor.

Its subcellular location is the cytoplasm. It catalyses the reaction Endonucleolytic cleavage to 5'-phosphomonoester.. Functionally, digests double-stranded RNA. Involved in the processing of primary rRNA transcript to yield the immediate precursors to the large and small rRNAs (23S and 16S). Processes some mRNAs, and tRNAs when they are encoded in the rRNA operon. Processes pre-crRNA and tracrRNA of type II CRISPR loci if present in the organism. The sequence is that of Ribonuclease 3 from Azorhizobium caulinodans (strain ATCC 43989 / DSM 5975 / JCM 20966 / LMG 6465 / NBRC 14845 / NCIMB 13405 / ORS 571).